A 202-amino-acid chain; its full sequence is Dephospho-CoA kinase (202 aa).

In terms of domain architecture, DPCK spans 4-200 (VVGVTGGIGS…QRYLAATVAQ (197 aa)). Residue 12–17 (GSGKSA) participates in ATP binding.

Belongs to the CoaE family.

The protein localises to the cytoplasm. The catalysed reaction is 3'-dephospho-CoA + ATP = ADP + CoA + H(+). The protein operates within cofactor biosynthesis; coenzyme A biosynthesis; CoA from (R)-pantothenate: step 5/5. Its function is as follows. Catalyzes the phosphorylation of the 3'-hydroxyl group of dephosphocoenzyme A to form coenzyme A. This chain is Dephospho-CoA kinase, found in Idiomarina loihiensis (strain ATCC BAA-735 / DSM 15497 / L2-TR).